A 220-amino-acid polypeptide reads, in one-letter code: Uracil-DNA glycosylase (220 aa).

The active-site Proton acceptor is Asp61.

The protein belongs to the uracil-DNA glycosylase (UDG) superfamily. UNG family.

Its subcellular location is the cytoplasm. It catalyses the reaction Hydrolyzes single-stranded DNA or mismatched double-stranded DNA and polynucleotides, releasing free uracil.. Functionally, excises uracil residues from the DNA which can arise as a result of misincorporation of dUMP residues by DNA polymerase or due to deamination of cytosine. This chain is Uracil-DNA glycosylase, found in Glaesserella parasuis serovar 5 (strain SH0165) (Haemophilus parasuis).